Consider the following 216-residue polypeptide: Imidazole glycerol phosphate synthase subunit HisH (216 aa).

In terms of domain architecture, Glutamine amidotransferase type-1 spans 2–216 (RVAIIDYGSG…LIANFLKWKP (215 aa)). The active-site Nucleophile is the C88. Residues H196 and E198 contribute to the active site.

Heterodimer of HisH and HisF.

The protein resides in the cytoplasm. The catalysed reaction is 5-[(5-phospho-1-deoxy-D-ribulos-1-ylimino)methylamino]-1-(5-phospho-beta-D-ribosyl)imidazole-4-carboxamide + L-glutamine = D-erythro-1-(imidazol-4-yl)glycerol 3-phosphate + 5-amino-1-(5-phospho-beta-D-ribosyl)imidazole-4-carboxamide + L-glutamate + H(+). It carries out the reaction L-glutamine + H2O = L-glutamate + NH4(+). It functions in the pathway amino-acid biosynthesis; L-histidine biosynthesis; L-histidine from 5-phospho-alpha-D-ribose 1-diphosphate: step 5/9. In terms of biological role, IGPS catalyzes the conversion of PRFAR and glutamine to IGP, AICAR and glutamate. The HisH subunit catalyzes the hydrolysis of glutamine to glutamate and ammonia as part of the synthesis of IGP and AICAR. The resulting ammonia molecule is channeled to the active site of HisF. The protein is Imidazole glycerol phosphate synthase subunit HisH of Brucella abortus biovar 1 (strain 9-941).